Consider the following 959-residue polypeptide: Bifunctional premutilin synthase (959 aa).

A class II diterpene cyclase region spans residues 1 to 542 (MGLSEDLHAR…ALNVPIPRFD (542 aa)). Positions 309–312 (DADM) match the DXDD motif motif. The active-site For class II diterpene cyclase activity is the D311. A class I diterpene synthase region spans residues 543–959 (PASITTLPPI…TANGSNGIHH (417 aa)). The active-site For class I diterpene synthase activity is D649. Residues D649, D653, and N824 each coordinate Mg(2+). A DDXXD motif motif is present at residues 649–653 (DDYLD). A disordered region spans residues 931–959 (KGANGVKKTNGLTTNGTKATANGSNGIHH). Low complexity predominate over residues 934–959 (NGVKKTNGLTTNGTKATANGSNGIHH).

It belongs to the terpene synthase family. Requires Mg(2+) as cofactor.

Its pathway is secondary metabolite biosynthesis; terpenoid biosynthesis. Bifunctional premutilin synthase; part of the gene cluster that mediates the biosynthesis of pleuromutilin, a tricyclic diterpene showing antibacterial properties. The geranylgeranyl diphosphate (GGPP) synthase ple4 catalyzes the first step in pleuromutilin biosynthesis. GGPP is then substrate of the premutilin synthase (PS) ple3 to yield premutilin. Premutilin synthase is a bifunctional enzyme composed of the fusion of a class II diterpene cyclase (DTC) and a class I diterpene synthase (DTS), with the corresponding domains and active sites containing characteristic aspartate-rich motifs. GGPP is first converted to mutildienyl-diphosphate (MPP) at the class II DTC site. MPP is subsequently further cyclized at the class I DTS site, followed by a 1,5-hydride shift and addition of water prior to terminating deprotonation, to yield premutilin. The cytochrome P450 monooxygenases ple5 and ple6 hydroxylate premutilin at C-11 and C-3, respectively, producing 11-hydroxypremutilin and 3-hydroxypremutilin. The combination of the actions of both ple5 and ple6 leads to the production of 3,11-dihydroxypremutilin. The short chain dehydrogenase ple7 further converts 3,11-dihydroxypremutilin into mutilin. The acetyltransferase ple2 then acetylates mutilin to produce 14-O-acetylmutilin. Finally, the cytochrome P450 monooxygenase ple1 catalyzes hydroxylation on the alpha position of the acetyl side chain of 14-O-acetylmutilin to yield pleuromutilin. The chain is Bifunctional premutilin synthase from Rhodocybe pseudopiperita (Clitopilus pseudopiperitus).